The chain runs to 601 residues: Elongation factor 4 (601 aa).

Residues 7-189 (DTIRNFSIVA…AIVAKLPPPK (183 aa)) enclose the tr-type G domain. GTP is bound by residues 19–24 (DHGKST) and 136–139 (NKID).

The protein belongs to the TRAFAC class translation factor GTPase superfamily. Classic translation factor GTPase family. LepA subfamily.

The protein localises to the cell inner membrane. The catalysed reaction is GTP + H2O = GDP + phosphate + H(+). Its function is as follows. Required for accurate and efficient protein synthesis under certain stress conditions. May act as a fidelity factor of the translation reaction, by catalyzing a one-codon backward translocation of tRNAs on improperly translocated ribosomes. Back-translocation proceeds from a post-translocation (POST) complex to a pre-translocation (PRE) complex, thus giving elongation factor G a second chance to translocate the tRNAs correctly. Binds to ribosomes in a GTP-dependent manner. This Methylobacterium nodulans (strain LMG 21967 / CNCM I-2342 / ORS 2060) protein is Elongation factor 4.